We begin with the raw amino-acid sequence, 528 residues long: PC4 and SFRS1-interacting protein (528 aa).

In terms of domain architecture, PWWP spans 7-64 (PGDLIFAKMKGYPHWPARVDEVPDGAVKPPTNKLPIFFFGTHETAFLGPKDIFPYSEN). Residues 61 to 348 (YSENKEKYGK…EKKRETSMDS (288 aa)) are disordered. Lysine 75 is covalently cross-linked (Glycyl lysine isopeptide (Lys-Gly) (interchain with G-Cter in SUMO2)). Polar residues predominate over residues 92 to 106 (FSSQQASTKQSNASS). Serine 102, serine 105, and serine 106 each carry phosphoserine. Residues 113-135 (KETNVSKEDTDQEEKASNEDVTK) show a composition bias toward basic and acidic residues. 2 positions are modified to phosphothreonine: threonine 115 and threonine 122. Serine 129 carries the post-translational modification Phosphoserine. Threonine 141 carries the post-translational modification Phosphothreonine. Basic residues predominate over residues 144–153 (AARRGRKRKA). A Nuclear localization signal motif is present at residues 146-156 (RRGRKRKAEKQ). Serine 176 and serine 205 each carry phosphoserine. A compositionally biased stretch (basic and acidic residues) spans 212–260 (DEDKSKKKGPEEKQPKKQLKKEEEGQKEEEKPRKEPDKKEGKKEVESKR). A Phosphoserine modification is found at serine 270. Threonine 271 carries the post-translational modification Phosphothreonine. Phosphoserine is present on residues serine 272 and serine 274. Residues 285-300 (KRKGGRNFQAAHRRNM) are compositionally biased toward basic residues. Positions 303 to 348 (GQHEKEAGDRKRKQEEQMETEQQNKDEGKKPEVKKVEKKRETSMDS) are enriched in basic and acidic residues. 2 coiled-coil regions span residues 306–332 (EKEAGDRKRKQEEQMETEQQNKDEGKK) and 369–393 (NRCIEALDELASLQVTMQQAQKHTE). Positions 338-415 (VEKKRETSMD…VSQVIMEKST (78 aa)) are integrase-binding domain (IBD). Serine 432 is modified (phosphoserine). At threonine 435 the chain carries Phosphothreonine. Serine 441 carries the post-translational modification Phosphoserine. Residues 444–471 (EQRQHEEANKTKDQGKKGPNKKLEKEPT) are compositionally biased toward basic and acidic residues. Positions 444 to 528 (EQRQHEEANK…ISLKESTLDN (85 aa)) are disordered. A compositionally biased stretch (polar residues) spans 472–492 (GTKSLNGGSDAQESNHPQHNG). A compositionally biased stretch (basic and acidic residues) spans 496–528 (EDGKDSREASSKTKPPGEEREAEISLKESTLDN). Citrulline is present on arginine 515. Residue serine 520 is modified to Phosphoserine. Phosphothreonine is present on threonine 525.

This sequence belongs to the HDGF family. Monomer. Interacts with IFRD1/PC4. Interacts (via IBD domain) with POGZ (via IBM motif) and CDCA7L (via IBM motifs). Interacts (via IBD domain) with KMT2A (via IBM motifs) with a moderate affinity whereas interacts with the KMT2A-MEN1 complex with a greater affinity; MEN1 enhances interaction of KMT2A with PSIP1. Interacts (via IBD domain) with IWS1 (via IBM motif), MED1 (via IBM motif) and DBF4 (via IBM motifs). Citrullinated by PADI4.

It is found in the nucleus. Functionally, transcriptional coactivator involved in neuroepithelial stem cell differentiation and neurogenesis. Involved in particular in lens epithelial cell gene regulation and stress responses. May play an important role in lens epithelial to fiber cell terminal differentiation. May play a protective role during stress-induced apoptosis. The sequence is that of PC4 and SFRS1-interacting protein (Psip1) from Mus musculus (Mouse).